Reading from the N-terminus, the 95-residue chain is Large ribosomal subunit protein uL23 (95 aa).

This sequence belongs to the universal ribosomal protein uL23 family. In terms of assembly, part of the 50S ribosomal subunit. Contacts protein L29, and trigger factor when it is bound to the ribosome.

Functionally, one of the early assembly proteins it binds 23S rRNA. One of the proteins that surrounds the polypeptide exit tunnel on the outside of the ribosome. Forms the main docking site for trigger factor binding to the ribosome. The polypeptide is Large ribosomal subunit protein uL23 (Pelotomaculum thermopropionicum (strain DSM 13744 / JCM 10971 / SI)).